Consider the following 375-residue polypeptide: MTTATESEAPRIHKGLAGVVVDTTAISKVVPETNSLTYRGYPVQDLAAQCSFEQVAYLLWHGELPTDQLALFSQRERASRRIDRSMQALLAKLPDNCHPMDVVRTAISYLGAEDLEEDVDTAEANYAKSLRMFAVLPTIVATDIRRRQGLTPIPPHSQLGYAQNFLNMCFGEVPEPVVVRAFEQSMVLYAEHSFNASTFAARVVTSTQSDIYSAVTAAIGALKGSLHGGANEAVMHDMLEIGSAEKAPEWLHGKLSRKEKVMGFGHRVYKNGDSRVPTMKVALEQVAQVRDGQRWLDIYNTLESAMFAATRIKPNLDFPTGPAYYLMDFPIESFTPLFVMSRITGWTAHIMEQAASNALIRPLSEYSGQPQRSLV.

Active-site residues include histidine 266 and aspartate 317.

Belongs to the citrate synthase family. Homohexamer.

It carries out the reaction oxaloacetate + acetyl-CoA + H2O = citrate + CoA + H(+). It functions in the pathway carbohydrate metabolism; tricarboxylic acid cycle; isocitrate from oxaloacetate: step 1/2. Its activity is regulated as follows. Allosterically inhibited by NADH. This is Citrate synthase (gltA) from Mycolicibacterium smegmatis (Mycobacterium smegmatis).